Reading from the N-terminus, the 327-residue chain is Ribonucleoside-diphosphate reductase small chain (327 aa).

Fe cation-binding residues include Asp-70, Glu-101, and His-104. The active site involves Tyr-108. Fe cation is bound by residues Glu-164, Glu-198, and His-201.

This sequence belongs to the ribonucleoside diphosphate reductase small chain family. As to quaternary structure, heterotetramer composed of a homodimer of the large subunit (R1) and a homodimer of the small subunit (R2). Larger multisubunit protein complex are also active, composed of (R1)n(R2)n. Requires Fe cation as cofactor.

The enzyme catalyses a 2'-deoxyribonucleoside 5'-diphosphate + [thioredoxin]-disulfide + H2O = a ribonucleoside 5'-diphosphate + [thioredoxin]-dithiol. Ribonucleoside-diphosphate reductase holoenzyme provides the precursors necessary for viral DNA synthesis. Allows virus growth in non-dividing cells. Catalyzes the biosynthesis of deoxyribonucleotides from the corresponding ribonucleotides. The protein is Ribonucleoside-diphosphate reductase small chain of Ornithodoros (relapsing fever ticks).